Here is a 524-residue protein sequence, read N- to C-terminus: MATQKEDHTALDLIIKSLKSPTMVCEGTHFDGKIPHTFVIFGASGDLAKKKIYPTLWWLYRDDLLPKPTKFCGYARSMLTVDSIKEQCLPYMKVQPHEQKKYEEFWALNEYVSGRYDGRTGFELLNQQLEIMENKNKANRIFYLALPPSVFEEVTVNIKQICMSVCGWNRVIIEKPFGRDDASSQALSDHLAGLFQEDQLYRIDHYLGKEMVQNLMTIRFGNKILSSTWNRENIASVLITFKEPFGTQGRGGYFDEFGIIRDVMQNHLLQILSLVAMEKPVSCHPDDIRDEKVKVLKSIEALTLDDMVLGQYLGNPQGTNDDARTGYVEDPTVSNDSNTPTYALGVLKINNERWQGVPFILRCGKALNERKAEVRIQYQDVPGDIFEGNTKRNELVIRVQPGEALYFKMMTKSPGITFDIEETELDLTYEHRYKDSYLPDAYERLILDVFCGSQMHFVRSDELREAWRIFTPILHQIEKEHIRPITYQYGSRGPKEADRKCEENNFKYSGSYKWHGGKAATSNH.

Serine 20 is modified (phosphoserine). Residues 42 to 49 (GASGDLAK), arginine 76, and lysine 175 contribute to the NADP(+) site. Residues lysine 175, 205–209 (HYLGK), glutamate 243, and aspartate 262 each bind D-glucose 6-phosphate. Histidine 267 serves as the catalytic Proton acceptor. Residue arginine 362 participates in NADP(+) binding. Residues lysine 365 and arginine 370 each coordinate D-glucose 6-phosphate. NADP(+) is bound by residues lysine 371, arginine 375, and arginine 398. Position 400 (glutamine 400) interacts with D-glucose 6-phosphate. NADP(+) is bound by residues 406–408 (YFK), 426–428 (DLT), arginine 492, tyrosine 508, and tryptophan 514.

The protein belongs to the glucose-6-phosphate dehydrogenase family.

It localises to the cytoplasm. The protein resides in the cytosol. The catalysed reaction is D-glucose 6-phosphate + NADP(+) = 6-phospho-D-glucono-1,5-lactone + NADPH + H(+). It participates in carbohydrate degradation; pentose phosphate pathway; D-ribulose 5-phosphate from D-glucose 6-phosphate (oxidative stage): step 1/3. Functionally, cytosolic glucose-6-phosphate dehydrogenase that catalyzes the first and rate-limiting step of the oxidative branch within the pentose phosphate pathway/shunt, an alternative route to glycolysis for the dissimilation of carbohydrates and a major source of reducing power and metabolic intermediates for fatty acid and nucleic acid biosynthetic processes. The chain is Glucose-6-phosphate 1-dehydrogenase from Drosophila melanogaster (Fruit fly).